We begin with the raw amino-acid sequence, 449 residues long: Phosphoglucosamine mutase (449 aa).

S99 functions as the Phosphoserine intermediate in the catalytic mechanism. Positions 99, 239, 241, and 243 each coordinate Mg(2+). S99 bears the Phosphoserine mark.

The protein belongs to the phosphohexose mutase family. Mg(2+) is required as a cofactor. In terms of processing, activated by phosphorylation.

The catalysed reaction is alpha-D-glucosamine 1-phosphate = D-glucosamine 6-phosphate. Catalyzes the conversion of glucosamine-6-phosphate to glucosamine-1-phosphate. The polypeptide is Phosphoglucosamine mutase (Finegoldia magna (strain ATCC 29328 / DSM 20472 / WAL 2508) (Peptostreptococcus magnus)).